The following is a 117-amino-acid chain: Non-specific lipid-transfer protein 3 (117 aa).

Residues 1–25 (MAGLVKLSCLVLACMIVAGPIATNA) form the signal peptide. 4 disulfide bridges follow: cysteine 29–cysteine 76, cysteine 39–cysteine 53, cysteine 54–cysteine 99, and cysteine 74–cysteine 113.

Belongs to the plant LTP family.

Its function is as follows. Plant non-specific lipid-transfer proteins transfer phospholipids as well as galactolipids across membranes. May play a role in wax or cutin deposition in the cell walls of expanding epidermal cells and certain secretory tissues. The sequence is that of Non-specific lipid-transfer protein 3 (LTP3) from Brassica napus (Rape).